Consider the following 564-residue polypeptide: uncharacterized protein (564 aa).

Over residues 1 to 17 (MRRPSTASLTRTPSRAS) the composition is skewed to polar residues. Residues 1–564 (MRRPSTASLT…ASTPSSEVIS (564 aa)) form a disordered region. Composition is skewed to low complexity over residues 79-97 (SPRT…RASP) and 114-134 (SPTG…ASPT). Polar residues predominate over residues 153 to 168 (RSPSTASLTRTPSRAS). Positions 170–179 (TRWPPRASPT) are enriched in low complexity. Residues 250–271 (GSPPRASPMTPPRASPRTPPRA) show a composition bias toward pro residues. Residues 272 to 299 (SPTTTPSRASLTRTPSWASPTTTPSRAS) are compositionally biased toward low complexity. The span at 318–351 (PTGTPSRASPTGTPSRASLTGSPSRASLTGTPSR) shows a compositional bias: polar residues. Positions 378–416 (RASLTGTSSTASLTRTPSRASLTRTQSSSSLTRTPSMAS) are enriched in low complexity. The span at 467 to 564 (SRASLTRTPS…ASTPSSEVIS (98 aa)) shows a compositional bias: polar residues.

This is an uncharacterized protein from Homo sapiens (Human).